Here is a 327-residue protein sequence, read N- to C-terminus: Regulatory protein MsrR (327 aa).

Residues 1 to 18 (MDKETNDNEYRRQSEHRT) show a composition bias toward basic and acidic residues. A disordered region spans residues 1-24 (MDKETNDNEYRRQSEHRTSAPKRK). The Cytoplasmic portion of the chain corresponds to 1–31 (MDKETNDNEYRRQSEHRTSAPKRKKKKKIRK). Residues 32–52 (LPIILLIVVILLIALVVYIVH) traverse the membrane as a helical; Signal-anchor for type II membrane protein segment. Over 53-327 (SYNSGVEYAK…QAIKDFLDED (275 aa)) the chain is Extracellular.

It belongs to the LytR/CpsA/Psr (LCP) family.

Its subcellular location is the cell membrane. In terms of biological role, involved in SarA attenuation. Affects resistance to oxacillin and teicoplanin, as well as the synthesis of virulence factors. The chain is Regulatory protein MsrR (msrR) from Staphylococcus aureus (strain Mu50 / ATCC 700699).